The sequence spans 217 residues: NADPH-dependent 3-demethoxyubiquinone 3-hydroxylase, mitochondrial (217 aa).

Tandem repeats lie at residues 48 to 129 (AVDQ…TALL) and 130 to 217 (GKEG…SERF). The tract at residues 48 to 217 (AVDQIIRVDH…SAAIYLSERF (170 aa)) is 2 X approximate tandem repeats. Positions 60, 90, 93, 142, 178, and 181 each coordinate Fe cation. Residues tyrosine 212 and arginine 216 each contribute to the NADH site.

This sequence belongs to the COQ7 family. Component of a multi-subunit COQ enzyme complex. Interacts with COQ8B and COQ6. Interacts with COQ9. Requires Fe cation as cofactor.

It localises to the mitochondrion inner membrane. It catalyses the reaction a 5-methoxy-2-methyl-3-(all-trans-polyprenyl)benzoquinone + NADH + O2 = a 3-demethylubiquinone + NAD(+) + H2O. It participates in cofactor biosynthesis; ubiquinone biosynthesis. In terms of biological role, catalyzes the hydroxylation of the 5-methoxy-2-methyl-3-(all-trans-polyprenyl)benzoquinone at the C6 position and participates in the biosynthesis of ubiquinone. Catalyzes the reaction through a substrate-mediated reduction pathway, whereby NADH shuttles electrons to 5-methoxy-2-methyl-3-(all-trans-decaprenyl)benzoquinone, which then transfers the electrons to the two Fe(3+) centers. The binding of 5-methoxy-2-methyl-3-(all-trans-polyprenyl)benzoquinone (DMQn) mediates reduction of the diiron center by nicotinamide adenine dinucleotide (NADH) and initiates oxygen activation for subsequent DMQ hydroxylation. The physiological substrates are 5-methoxy-2-methyl-3-(all-trans-nonaprenyl)benzoquinone (DMQ(9)) and 5-methoxy-2-methyl-3-(all-trans-decaprenyl)benzoquinone (DMQ(10)), however in vitro the enzyme does not have any specificity concerning the length of the polyprenyl tail, and accepts tails of various lengths with similar efficiency. Also has a structural role in the COQ enzyme complex, stabilizing other COQ polypeptides. Involved in lifespan determination in a ubiquinone-independent manner. Plays a role in modulating mitochondrial stress responses, acting in the nucleus, perhaps via regulating gene expression, independent of its characterized mitochondrial function in ubiquinone biosynthesis. The chain is NADPH-dependent 3-demethoxyubiquinone 3-hydroxylase, mitochondrial from Rattus norvegicus (Rat).